Reading from the N-terminus, the 273-residue chain is Putative pyruvate, phosphate dikinase regulatory protein (273 aa).

149-156 (GPSRTSKT) is a binding site for ADP.

It belongs to the pyruvate, phosphate/water dikinase regulatory protein family. PDRP subfamily.

The catalysed reaction is N(tele)-phospho-L-histidyl/L-threonyl-[pyruvate, phosphate dikinase] + ADP = N(tele)-phospho-L-histidyl/O-phospho-L-threonyl-[pyruvate, phosphate dikinase] + AMP + H(+). It carries out the reaction N(tele)-phospho-L-histidyl/O-phospho-L-threonyl-[pyruvate, phosphate dikinase] + phosphate + H(+) = N(tele)-phospho-L-histidyl/L-threonyl-[pyruvate, phosphate dikinase] + diphosphate. Functionally, bifunctional serine/threonine kinase and phosphorylase involved in the regulation of the pyruvate, phosphate dikinase (PPDK) by catalyzing its phosphorylation/dephosphorylation. The protein is Putative pyruvate, phosphate dikinase regulatory protein of Rickettsia akari (strain Hartford).